The chain runs to 147 residues: Large ribosomal subunit protein uL13 (147 aa).

This sequence belongs to the universal ribosomal protein uL13 family. In terms of assembly, part of the 50S ribosomal subunit.

Functionally, this protein is one of the early assembly proteins of the 50S ribosomal subunit, although it is not seen to bind rRNA by itself. It is important during the early stages of 50S assembly. The chain is Large ribosomal subunit protein uL13 from Mycolicibacterium gilvum (strain PYR-GCK) (Mycobacterium gilvum (strain PYR-GCK)).